The following is a 225-amino-acid chain: Type II restriction enzyme BslI subunit alpha (225 aa).

C4-type zinc fingers lie at residues 36–53 (CKDC…CYFC) and 63–84 (CNSC…TDGC).

As to quaternary structure, heterotetramer of two alpha and two beta subunits. The alpha subunit is believed to be responsible for DNA recognition, while the beta subunit is thought to mediate cleavage. Zn(2+) is required as a cofactor.

The enzyme catalyses Endonucleolytic cleavage of DNA to give specific double-stranded fragments with terminal 5'-phosphates.. A P subtype restriction enzyme that recognizes the double-stranded sequence 5'-CCN(7)GG-3' and cleaves after N-7. The protein is Type II restriction enzyme BslI subunit alpha of Bacillus sp. (strain NEB-606).